A 595-amino-acid chain; its full sequence is Pectinesterase 5 (595 aa).

An N-terminal signal peptide occupies residues 1 to 24 (MIGKVVVSVASILLIVGVAIGVVA). Asparagine 86 and asparagine 206 each carry an N-linked (GlcNAc...) asparagine glycan. Residues 215 to 239 (SDKGAAPVNKGTPPVADDSPVADPD) are disordered. The segment covering 227-239 (PPVADDSPVADPD) has biased composition (low complexity). The RRLL cleavage motif signature appears at 243-246 (RRLL). The RKLM cleavage motif signature appears at 263–266 (RKLM). Asparagine 349 carries an N-linked (GlcNAc...) asparagine glycan. Residues threonine 360 and glutamine 390 each contribute to the substrate site. Aspartate 413 acts as the Proton donor in catalysis. The active-site Nucleophile is the aspartate 434. Substrate is bound by residues arginine 503 and tryptophan 505.

This sequence in the N-terminal section; belongs to the PMEI family. In the C-terminal section; belongs to the pectinesterase family. Interacts with SBT6.1. Expressed in pollen grains and pollen tubes.

The protein resides in the cell membrane. It localises to the secreted. The protein localises to the cell wall. It is found in the golgi apparatus membrane. The catalysed reaction is [(1-&gt;4)-alpha-D-galacturonosyl methyl ester](n) + n H2O = [(1-&gt;4)-alpha-D-galacturonosyl](n) + n methanol + n H(+). Its pathway is glycan metabolism; pectin degradation; 2-dehydro-3-deoxy-D-gluconate from pectin: step 1/5. In terms of biological role, acts in the modification of cell walls via demethylesterification of cell wall pectin. Plays an important role in growth of pollen tubes in female floral tissues, possibly via enhancing the interaction between the pollen tube and female floral tissues by modification of the cell walls. May be regulated by MYB80 during anther development and play a role in tapetum and pollen development. In Arabidopsis thaliana (Mouse-ear cress), this protein is Pectinesterase 5 (PME5).